We begin with the raw amino-acid sequence, 101 residues long: NADH-quinone oxidoreductase subunit K (101 aa).

3 consecutive transmembrane segments (helical) span residues 4-24, 30-50, and 61-81; these read LTHY…GIFM, LVLL…FIAF, and IFVF…LAIM.

This sequence belongs to the complex I subunit 4L family. As to quaternary structure, NDH-1 is composed of 14 different subunits. Subunits NuoA, H, J, K, L, M, N constitute the membrane sector of the complex.

It is found in the cell inner membrane. The enzyme catalyses a quinone + NADH + 5 H(+)(in) = a quinol + NAD(+) + 4 H(+)(out). NDH-1 shuttles electrons from NADH, via FMN and iron-sulfur (Fe-S) centers, to quinones in the respiratory chain. The immediate electron acceptor for the enzyme in this species is believed to be ubiquinone. Couples the redox reaction to proton translocation (for every two electrons transferred, four hydrogen ions are translocated across the cytoplasmic membrane), and thus conserves the redox energy in a proton gradient. The sequence is that of NADH-quinone oxidoreductase subunit K from Neisseria meningitidis serogroup B (strain ATCC BAA-335 / MC58).